Consider the following 372-residue polypeptide: Glutamate 5-kinase (372 aa).

Lys14 lines the ATP pocket. Substrate-binding residues include Ser54, Asp141, and Asn153. Residue 173–174 (TD) coordinates ATP. The PUA domain occupies 280 to 358 (RGHVVIDDGA…GEIESVLGYM (79 aa)).

It belongs to the glutamate 5-kinase family.

It localises to the cytoplasm. It catalyses the reaction L-glutamate + ATP = L-glutamyl 5-phosphate + ADP. Its pathway is amino-acid biosynthesis; L-proline biosynthesis; L-glutamate 5-semialdehyde from L-glutamate: step 1/2. In terms of biological role, catalyzes the transfer of a phosphate group to glutamate to form L-glutamate 5-phosphate. This chain is Glutamate 5-kinase, found in Paraburkholderia xenovorans (strain LB400).